The following is a 114-amino-acid chain: Large ribosomal subunit protein bL19 (114 aa).

It belongs to the bacterial ribosomal protein bL19 family.

Functionally, this protein is located at the 30S-50S ribosomal subunit interface and may play a role in the structure and function of the aminoacyl-tRNA binding site. This chain is Large ribosomal subunit protein bL19, found in Acidithiobacillus ferrooxidans (strain ATCC 23270 / DSM 14882 / CIP 104768 / NCIMB 8455) (Ferrobacillus ferrooxidans (strain ATCC 23270)).